The primary structure comprises 213 residues: Large ribosomal subunit protein uL1 (213 aa).

This sequence belongs to the universal ribosomal protein uL1 family. Part of the 50S ribosomal subunit.

Functionally, binds directly to 23S rRNA. Probably involved in E site tRNA release. Its function is as follows. Protein L1 is also a translational repressor protein, it controls the translation of its operon by binding to its mRNA. The protein is Large ribosomal subunit protein uL1 of Nanoarchaeum equitans (strain Kin4-M).